The primary structure comprises 1202 residues: PAN2-PAN3 deadenylation complex catalytic subunit PAN2 (1202 aa).

WD repeat units follow at residues 153–193 (DENE…QKYA), 195–231 (ETPG…VEHE), 244–280 (VHGN…AITP), and 328–367 (PVGP…SFNP). The tract at residues 368-485 (YSRETEFALP…VGREEEPHLH (118 aa)) is linker. The region spanning 486 to 924 (MVSKKYRKVT…VPAILYYVKR (439 aa)) is the USP domain. Ser791 carries the phosphoserine modification. An Exonuclease domain is found at 975-1147 (VGLDAEFVTL…EDARTALQLY (173 aa)). The a divalent metal cation site is built by Asp978, Glu980, Asp1087, and Asp1139. Position 1189 is a phosphoserine (Ser1189).

The protein belongs to the peptidase C19 family. PAN2 subfamily. As to quaternary structure, forms a heterotrimer with an asymmetric homodimer of the regulatory subunit PAN3 to form the poly(A)-nuclease (PAN) deadenylation complex. Interacts with PAN3 isoform 1/Pan3L and isoform 3/Pan3S. Interacts with ZFP36. Requires a divalent metal cation as cofactor.

Its subcellular location is the cytoplasm. The protein localises to the P-body. It is found in the nucleus. It carries out the reaction Exonucleolytic cleavage of poly(A) to 5'-AMP.. Its activity is regulated as follows. Positively regulated by the regulatory subunit PAN3. Its function is as follows. Catalytic subunit of the poly(A)-nuclease (PAN) deadenylation complex, one of two cytoplasmic mRNA deadenylases involved in general and miRNA-mediated mRNA turnover. PAN specifically shortens poly(A) tails of RNA and the activity is stimulated by poly(A)-binding protein (PABP). PAN deadenylation is followed by rapid degradation of the shortened mRNA tails by the CCR4-NOT complex. Deadenylated mRNAs are then degraded by two alternative mechanisms, namely exosome-mediated 3'-5' exonucleolytic degradation, or deadenylation-dependent mRNA decaping and subsequent 5'-3' exonucleolytic degradation by XRN1. Also acts as an important regulator of the HIF1A-mediated hypoxic response. Required for HIF1A mRNA stability independent of poly(A) tail length regulation. This chain is PAN2-PAN3 deadenylation complex catalytic subunit PAN2, found in Homo sapiens (Human).